A 105-amino-acid polypeptide reads, in one-letter code: Large ribosomal subunit protein uL24 (105 aa).

It belongs to the universal ribosomal protein uL24 family. In terms of assembly, part of the 50S ribosomal subunit.

Its function is as follows. One of two assembly initiator proteins, it binds directly to the 5'-end of the 23S rRNA, where it nucleates assembly of the 50S subunit. One of the proteins that surrounds the polypeptide exit tunnel on the outside of the subunit. The polypeptide is Large ribosomal subunit protein uL24 (Leptothrix cholodnii (strain ATCC 51168 / LMG 8142 / SP-6) (Leptothrix discophora (strain SP-6))).